Consider the following 398-residue polypeptide: Probable sugar efflux transporter (398 aa).

12 helical membrane-spanning segments follow: residues 15-35 (VVTL…PVGL), 50-70 (VGIM…PFML), 81-101 (LIGL…AWNF), 103-123 (VLVI…SITA), 136-156 (AQAL…GLPI), 169-189 (TFFA…KLLP), 209-229 (PALM…YTAY), 246-266 (FATV…VLFG), 275-295 (LLVS…MPAA), 301-321 (LAIL…GMQV), 333-353 (VAMS…ALVG), and 364-384 (AIGY…ILIF).

This sequence belongs to the major facilitator superfamily. SotB (TC 2.A.1.2) family.

The protein resides in the cell inner membrane. Functionally, involved in the efflux of sugars. The physiological role may be the reduction of the intracellular concentration of toxic sugars or sugar metabolites. The protein is Probable sugar efflux transporter of Enterobacter sp. (strain 638).